We begin with the raw amino-acid sequence, 148 residues long: Ribonuclease H (148 aa).

An RNase H type-1 domain is found at 2–143 (TADIIYIYSD…ADVLANQGVL (142 aa)). 4 residues coordinate Mg(2+): aspartate 11, glutamate 49, aspartate 71, and aspartate 135.

The protein belongs to the RNase H family. As to quaternary structure, monomer. Mg(2+) is required as a cofactor.

The protein resides in the cytoplasm. It catalyses the reaction Endonucleolytic cleavage to 5'-phosphomonoester.. Functionally, endonuclease that specifically degrades the RNA of RNA-DNA hybrids. The sequence is that of Ribonuclease H from Thiobacillus denitrificans (strain ATCC 25259 / T1).